Reading from the N-terminus, the 400-residue chain is Leucine-rich repeat flightless-interacting protein 2 (400 aa).

2 disordered regions span residues 1 to 28 (MGTP…SNID) and 53 to 119 (LERQ…LSEV). Ser-18 is subject to Phosphoserine. Positions 29–71 (REAEARLAAKRAARAEARDIRMRELERQQKELDEKSDKQYAEN) form a coiled coil. Basic and acidic residues predominate over residues 53 to 68 (LERQQKELDEKSDKQY). The segment covering 73 to 102 (TRPSSRNSASATTPLSGNSSRRVSGDTSSL) has biased composition (polar residues). Phosphoserine occurs at positions 77, 80, 88, 92, and 96. Thr-99 is modified (phosphothreonine). A phosphoserine mark is found at Ser-100 and Ser-101. Coiled-coil stretches lie at residues 106-202 (DTSL…LIEK) and 245-393 (LDVR…KANR).

Belongs to the LRRFIP family. In terms of assembly, interacts with DVL3 and FLII. Weakly interacts with MYD88 in resting cells. Following LPS-stimulation, the interaction with MYD88 is rapidly enhanced; the complex gradually dissociates to basal levels after 6 hours of stimulation. Interaction with MYD88 is regulated by LPS-induced phosphorylation. In the presence of LPS, competes with FLII for MYD88-binding.

Functionally, may function as activator of the canonical Wnt signaling pathway, in association with DVL3, upstream of CTNNB1/beta-catenin. Positively regulates Toll-like receptor (TLR) signaling in response to agonist probably by competing with the negative FLII regulator for MYD88-binding. The sequence is that of Leucine-rich repeat flightless-interacting protein 2 (LRRFIP2) from Bos taurus (Bovine).